Reading from the N-terminus, the 365-residue chain is 3-galactosyl-N-acetylglucosaminide 4-alpha-L-fucosyltransferase FUT3 (365 aa).

Over 1–15 the chain is Cytoplasmic; it reads MYPPGCAKVKCSWHH. The chain crosses the membrane as a helical; Signal-anchor for type II membrane protein span at residues 16 to 34; the sequence is CLPGLLLQLLLALCFFSYL. Over 35 to 365 the chain is Lumenal; it reads RMSQEKPKPK…TVPSIASWFQ (331 aa). N-linked (GlcNAc...) asparagine glycans are attached at residues Asn100, Asn158, and Asn189.

The protein belongs to the glycosyltransferase 10 family. Glycosylated. Liver, kidney, lung and brain.

The protein localises to the golgi apparatus. The protein resides in the golgi stack membrane. It carries out the reaction a beta-D-galactosyl-(1-&gt;3)-N-acetyl-beta-D-glucosaminyl derivative + GDP-beta-L-fucose = a beta-D-galactosyl-(1-&gt;3)-[alpha-L-fucosyl-(1-&gt;4)]-N-acetyl-beta-D-glucosaminyl derivative + GDP + H(+). It catalyses the reaction an N-acetyl-alpha-neuraminyl-(2-&gt;3)-beta-D-galactosyl-(1-&gt;4)-N-acetyl-beta-D-glucosaminyl derivative + GDP-beta-L-fucose = an alpha-Neu5Ac-(2-&gt;3)-beta-D-Gal-(1-&gt;4)-[alpha-L-Fuc-(1-&gt;3)]-beta-D-GlcNAc derivative + GDP + H(+). The enzyme catalyses a beta-D-galactosyl-(1-&gt;4)-N-acetyl-beta-D-glucosaminyl derivative + GDP-beta-L-fucose = a beta-D-galactosyl-(1-&gt;4)-[alpha-L-fucosyl-(1-&gt;3)]-N-acetyl-beta-D-glucosaminyl derivative + GDP + H(+). The catalysed reaction is an alpha-Neu5Ac-(2-&gt;3)-beta-D-Gal-(1-&gt;4)-beta-D-GlcNAc-(1-&gt;3)-beta-D-Gal-(1-&gt;4)-[alpha-L-Fuc-(1-&gt;3)]-beta-D-GlcNAc derivative + GDP-beta-L-fucose = an alpha-Neu5Ac-(2-&gt;3)-beta-D-Gal-(1-&gt;4)-[alpha-L-Fuc-(1-&gt;3)]-beta-D-GlcNAc-(1-&gt;3)-beta-D-Gal-(1-&gt;4)-[alpha-L-Fuc-(1-&gt;3)]-beta-D-GlcNAc derivative + GDP + H(+). It carries out the reaction Lc4Cer + GDP-beta-L-fucose = a lactoside III(4)-a-Fuc-Lc4Cer + GDP + H(+). It catalyses the reaction a beta-D-Gal-(1-&gt;3)-beta-D-GlcNAc-(1-&gt;3)-beta-D-Gal-(1-&gt;4)-beta-D-Glc-(1&lt;-&gt;1')-Cer(d18:1(4E)) + GDP-beta-L-fucose = a III(4)-a-Fuc-Lc4Cer(d18:1(4E)) + GDP + H(+). The enzyme catalyses N-acetyl-alpha-neuraminosyl-(2-&gt;3)-beta-D-galactosyl-(1-&gt;3)-[N-acetyl-alpha-neuraminosyl-(2-&gt;6)]-N-acetyl-beta-D-glucosaminyl-(1-&gt;3)-beta-D-galactosyl-(1-&gt;4)-beta-D-glucosyl-(1&lt;-&gt;1')-N-acyl-sphing-4-enine + GDP-beta-L-fucose = N-acetyl-alpha-neuraminosyl-(2-&gt;3)-beta-D-galactosyl-(1-&gt;3)-alpha-L-fucosyl-(1-&gt;4)-[N-acetyl-alpha-neuraminosyl-(2-&gt;6)-N-acetyl-beta-D-glucosaminyl-(1-&gt;3)]-beta-D-galactosyl-(1-&gt;4)-beta-D-glucosyl-(1&lt;-&gt;1')-N-acyl-sphing-4-enine + GDP + H(+). The catalysed reaction is N-acetyl-alpha-neuraminosyl-(2-&gt;3)-beta-D-galactosyl-(1-&gt;3)-N-acetyl-beta-D-glucosaminyl-(1-&gt;3)-beta-D-galactosyl-(1-&gt;4)-beta-D-glucosyl-(1&lt;-&gt;1')-N-acyl-sphing-4-enine + GDP-beta-L-fucose = N-acetyl-alpha-neuraminosyl-(2-&gt;3)-beta-D-galactosyl-(1-&gt;3)-alpha-L-fucosyl-(1-&gt;4)-[N-acetyl-beta-D-glucosaminyl-(1-&gt;3)]-beta-D-galactosyl-(1-&gt;4)-beta-D-glucosyl-(1&lt;-&gt;1')-N-acyl-sphing-4-enine + GDP + H(+). It carries out the reaction beta-D-galactosyl-(1-&gt;3)-N-acetyl-D-glucosamine + GDP-beta-L-fucose = beta-D-galactosyl-(1-&gt;3)-[alpha-L-fucosyl-(1-&gt;4)]-N-acetyl-D-glucosamine + GDP + H(+). It catalyses the reaction alpha-L-Fuc-(1-&gt;2)-beta-D-Gal-(1-&gt;3)-D-GlcNAc + GDP-beta-L-fucose = alpha-L-Fuc-(1-&gt;2)-beta-D-Gal-(1-&gt;3)-[alpha-L-Fuc-(1-&gt;4)]-D-GlcNAc + GDP + H(+). The enzyme catalyses alpha-L-Fuc-(1-&gt;2)-beta-D-Gal-(1-&gt;4)-D-GlcNAc + GDP-beta-L-fucose = alpha-L-Fuc-(1-&gt;2)-beta-D-Gal-(1-&gt;4)-[alpha-L-Fuc-(1-&gt;3)]-D-GlcNAc + GDP + H(+). The catalysed reaction is beta-D-galactosyl-(1-&gt;4)-N-acetyl-D-glucosamine + GDP-beta-L-fucose = beta-D-galactosyl-(1-&gt;4)-[alpha-L-fucosyl-(1-&gt;3)]-N-acetyl-D-glucosamine + GDP + H(+). It carries out the reaction lactose + GDP-beta-L-fucose = beta-D-galactosyl-(1-&gt;4)-[alpha-L-fucosyl-(1-&gt;3)]-D-glucose + GDP + H(+). It catalyses the reaction an alpha-Neu5Ac-(2-&gt;3)-beta-D-Gal-(1-&gt;3)-D-GlcNAc derivative + GDP-beta-L-fucose = an alpha-Neu5Ac-(2-&gt;3)-beta-D-Gal-(1-&gt;3)-[alpha-L-Fuc-(1-&gt;4)]-beta-D-GlcNAc derivative + GDP + H(+). The protein operates within protein modification; protein glycosylation. In terms of biological role, catalyzes the transfer of L-fucose, from a guanosine diphosphate-beta-L-fucose, to both the subterminal N-acetyl glucosamine (GlcNAc) of type 1 chain (beta-D-Gal-(1-&gt;3)-beta-D-GlcNAc) glycolipids and oligosaccharides via an alpha(1,4) linkage, and the subterminal glucose (Glc) or GlcNAc of type 2 chain (beta-D-Gal-(1-&gt;4)-beta-D-GlcNAc) oligosaccharides via an alpha(1,3) linkage, independently of the presence of terminal alpha-L-fucosyl-(1,2) moieties on the terminal galactose of these acceptors and participates in the blood groups Lewis determination and expression of Lewis a (Le(a)), lewis b (Le(b)), Lewis x/SSEA-1 (Le(x)) and lewis y (Le(y)) antigens. Also catalyzes the transfer of L-fucose to subterminal GlcNAc of sialyl- and disialyl-lactotetraosylceramide to produce sialyl Lewis a (sLe(a)) and disialyl Lewis a via an alpha(1,4) linkage and therefore may regulate cell surface sialyl Lewis a expression and consequently regulates adhesive properties to E-selectin, cell proliferation and migration. Catalyzes the transfer of an L-fucose to 3'-sialyl-N-acetyllactosamine by an alpha(1,3) linkage, which allows the formation of sialyl-Lewis x structure and therefore may regulate the sialyl-Lewis x surface antigen expression and consequently adhesive properties to E-selectin. Prefers type 1 chain over type 2 acceptors. Type 1 tetrasaccharide is a better acceptor than type 1 disaccharide suggesting that a beta anomeric configuration of GlcNAc in the substrate is preferred. Lewis-positive (Le(+)) individuals have an active enzyme while Lewis-negative (Le(-)) individuals have an inactive enzyme. The chain is 3-galactosyl-N-acetylglucosaminide 4-alpha-L-fucosyltransferase FUT3 from Bos taurus (Bovine).